The following is a 299-amino-acid chain: Tyrosine recombinase XerC (299 aa).

Residues 1-85 (MERQLEAYCA…AVRGLYRYLN (85 aa)) enclose the Core-binding (CB) domain. Residues 106–285 (RLPKTLDTDR…DFQHLAAVYD (180 aa)) enclose the Tyr recombinase domain. Catalysis depends on residues Arg-146, Lys-170, His-237, Arg-240, and His-263. Residue Tyr-272 is the O-(3'-phospho-DNA)-tyrosine intermediate of the active site.

It belongs to the 'phage' integrase family. XerC subfamily. As to quaternary structure, forms a cyclic heterotetrameric complex composed of two molecules of XerC and two molecules of XerD.

Its subcellular location is the cytoplasm. Functionally, site-specific tyrosine recombinase, which acts by catalyzing the cutting and rejoining of the recombining DNA molecules. The XerC-XerD complex is essential to convert dimers of the bacterial chromosome into monomers to permit their segregation at cell division. It also contributes to the segregational stability of plasmids. The protein is Tyrosine recombinase XerC of Pseudomonas entomophila (strain L48).